The chain runs to 551 residues: NAD(P)H-quinone oxidoreductase chain 4 (551 aa).

14 consecutive transmembrane segments (helical) span residues 25–45, 56–76, 111–131, 133–153, 157–177, 189–209, 233–253, 264–284, 298–318, 335–355, 356–376, 397–417, 438–458, and 485–505; these read FPWL…VPFI, WFAL…YLNG, LILL…PVTF, PKLF…VFAV, LLFF…LAIW, FILY…AMGF, LLCY…VPLH, TAPV…YALM, FAPL…LTSF, MGFV…GAML, QMIS…ATYD, FALW…SGFV, IVID…LLSM, and VYII…PRLM.

This sequence belongs to the complex I subunit 4 family.

The protein resides in the cellular thylakoid membrane. It carries out the reaction a plastoquinone + NADH + (n+1) H(+)(in) = a plastoquinol + NAD(+) + n H(+)(out). The enzyme catalyses a plastoquinone + NADPH + (n+1) H(+)(in) = a plastoquinol + NADP(+) + n H(+)(out). NDH-1 shuttles electrons from NAD(P)H, via FMN and iron-sulfur (Fe-S) centers, to quinones in the respiratory chain. The immediate electron acceptor for the enzyme in this species is believed to be plastoquinone. Couples the redox reaction to proton translocation (for every two electrons transferred, four hydrogen ions are translocated across the cytoplasmic membrane), and thus conserves the redox energy in a proton gradient. The polypeptide is NAD(P)H-quinone oxidoreductase chain 4 (Synechococcus sp. (strain WH7803)).